A 460-amino-acid chain; its full sequence is Chromosomal replication initiator protein DnaA (460 aa).

The tract at residues 1 to 83 is domain I, interacts with DnaA modulators; the sequence is MENIWLEAQT…EFHVADEKPE (83 aa). Residues 78 to 121 show a composition bias toward basic and acidic residues; that stretch reads ADEKPEAAPEEKPEKEGKPAREKEKDKDKEKEKDREKEKDKKEL. Residues 78–122 form a disordered region; the sequence is ADEKPEAAPEEKPEKEGKPAREKEKDKDKEKEKDREKEKDKKELV. The tract at residues 83-123 is domain II; sequence EAAPEEKPEKEGKPAREKEKDKDKEKEKDREKEKDKKELVP. The interval 124 to 340 is domain III, AAA+ region; the sequence is NLNPKYTFES…GMLIRLEAFA (217 aa). Residues Gly-168, Gly-170, Lys-171, and Thr-172 each coordinate ATP. The segment at 341–460 is domain IV, binds dsDNA; sequence SLTGQEITLS…VEDIRKKLFT (120 aa).

It belongs to the DnaA family. As to quaternary structure, oligomerizes as a right-handed, spiral filament on DNA at oriC.

The protein resides in the cytoplasm. Plays an essential role in the initiation and regulation of chromosomal replication. ATP-DnaA binds to the origin of replication (oriC) to initiate formation of the DNA replication initiation complex once per cell cycle. Binds the DnaA box (a 9 base pair repeat at the origin) and separates the double-stranded (ds)DNA. Forms a right-handed helical filament on oriC DNA; dsDNA binds to the exterior of the filament while single-stranded (ss)DNA is stabiized in the filament's interior. The ATP-DnaA-oriC complex binds and stabilizes one strand of the AT-rich DNA unwinding element (DUE), permitting loading of DNA polymerase. After initiation quickly degrades to an ADP-DnaA complex that is not apt for DNA replication. Binds acidic phospholipids. The protein is Chromosomal replication initiator protein DnaA of Geobacter sp. (strain M21).